A 429-amino-acid chain; its full sequence is CBL-interacting serine/threonine-protein kinase 7 (429 aa).

Residues 25–280 form the Protein kinase domain; that stretch reads YELGRRLGSG…IETVMKTNWF (256 aa). ATP-binding positions include 31 to 39 and lysine 54; that span reads LGSGSFAKV. Aspartate 149 functions as the Proton acceptor in the catalytic mechanism. The tract at residues 167-195 is activation loop; sequence DFGLSALPEHLQNGLLHTACGTPAYTAPE. Serine 171 is modified (phosphoserine). Threonine 184 carries the phosphothreonine modification. Residues 302 to 326 form the NAF domain; sequence SSVNSITAFDLISLSSGLDLSGLFE. Positions 330–363 are PPI; sequence KKERRFTAKVSGVEVEEKAKMIGEKLGYVVKKKM.

This sequence belongs to the protein kinase superfamily. CAMK Ser/Thr protein kinase family. SNF1 subfamily. In terms of assembly, interacts with CBL1, CBL2 and CBL3. Mn(2+) is required as a cofactor. In terms of processing, autophosphorylated. As to expression, strongly expressed in leaves, but barely expressed in roots, stems or flowers.

It catalyses the reaction L-seryl-[protein] + ATP = O-phospho-L-seryl-[protein] + ADP + H(+). It carries out the reaction L-threonyl-[protein] + ATP = O-phospho-L-threonyl-[protein] + ADP + H(+). Its function is as follows. CIPK serine-threonine protein kinases interact with CBL proteins. Binding of a CBL protein to the regulatory NAF domain of CIPK protein lead to the activation of the kinase in a calcium-dependent manner. Phosphorylates the rice sucrose synthase (SuSy) in vitro in an allosteric manner. Involved in cold response. This is CBL-interacting serine/threonine-protein kinase 7 (CIPK7) from Arabidopsis thaliana (Mouse-ear cress).